We begin with the raw amino-acid sequence, 706 residues long: DNA helicase/primase complex-associated protein (706 aa).

The disordered stretch occupies residues C203–R249. A compositionally biased stretch (gly residues) spans G217 to S236.

The protein belongs to the herpesviridae HEPA family. Associates with the primase and the helicase to form the helicase-primase complex. Interacts with the origin-binding protein. Interacts with the polymerase catalytic subunit.

It is found in the host nucleus. Its function is as follows. Component of the helicase/primase complex. Unwinds the DNA at the replication forks and generates single-stranded DNA for both leading and lagging strand synthesis. The primase synthesizes short RNA primers on the lagging strand that the polymerase presumably elongates using dNTPs. The primase-associated factor has no known catalytic activity in the complex and may serve to facilitate the formation of the replisome by directly interacting with the origin-binding protein and the polymerase. This Equus caballus (Horse) protein is DNA helicase/primase complex-associated protein (40).